The sequence spans 164 residues: Leucine-rich single-pass membrane protein 2 (164 aa).

A helical transmembrane segment spans residues 97–117; that stretch reads GFLLLLALLVLTCLVLALLAV.

It is found in the membrane. The sequence is that of Leucine-rich single-pass membrane protein 2 (LSMEM2) from Homo sapiens (Human).